Here is a 324-residue protein sequence, read N- to C-terminus: Putative transcription factor sel-7 (324 aa).

Residues 67–85 (SPPQTVISEAPPQSFTPSA) show a composition bias toward polar residues. The segment at 67-151 (SPPQTVISEA…DEKVLADGPF (85 aa)) is disordered. Residues 86 to 98 (TNSTSDKTSSSLK) are compositionally biased toward low complexity. Residues 106-123 (SDGDLDMEGEEDTEELFD) show a composition bias toward acidic residues. Polar residues predominate over residues 124–133 (NESQPSQRNQ). The span at 134–146 (SPKETEVEDEKVL) shows a compositional bias: basic and acidic residues.

As to quaternary structure, multimer. May interact with mediator complex subunit mdt-29. As to expression, widely expressed, including in pharyngeal muscle cells and body wall muscle cells.

It is found in the nucleus. In terms of biological role, putative transcription factor. Positive regulator of the lin-12/Notch signaling pathway. Binds to specific DNA sequences in regulatory elements. Involved in cell fate decisions that require cell-cell interactions, such as the anchor cell (AC) / ventral uterine (VU) precursor cell fate decision. Heterochronic protein which controls the choice of stage specific cell fates, including the larval L3 stage-specific fate of seam cells. Involved in regulating the temporal expression pattern of hunchback-like protein hbl-1, thereby playing a role in the progression between larval stages L2 and L3. This is Putative transcription factor sel-7 from Caenorhabditis elegans.